Consider the following 174-residue polypeptide: Gamma-crystallin F (174 aa).

2 consecutive Beta/gamma crystallin 'Greek key' domains span residues 2–40 and 41–83; these read GKITFYEDRGFQGRHYECSTDHSNLQPYFSRCNSVRVDS and GCWM…HLIP. Residues 84 to 87 form a connecting peptide region; the sequence is HSSS. 2 consecutive Beta/gamma crystallin 'Greek key' domains span residues 88-128 and 129-171; these read HRIR…HVIE and GYWV…RRIM.

It belongs to the beta/gamma-crystallin family.

Its function is as follows. Crystallins are the dominant structural components of the vertebrate eye lens. In Rattus norvegicus (Rat), this protein is Gamma-crystallin F (Crygf).